A 252-amino-acid chain; its full sequence is MVAAAAATGILSLCGSPALADSHADGAATNSPGAVSGNALQVPVDVPVNACGNTVDVIAALNPAFGNECENASDEKTDGHGGGYGEDASSSSSSSTSASSSGSHADGATEGSPGVGSGNNAQVPVDVPVNLCGNTVDVIAALNPVFGNKCENDAEEPPGYGEEEPPPPTTPPGYGEEEPPPPTHEEPPPPSGEEEPPPPSEEEHTPPAPQTEQPPALAETGSEGTLGAAAAGAVLIAGGAILYRRGRALSGR.

A signal peptide spans 1 to 20 (MVAAAAATGILSLCGSPALA). Residues 31–71 (SPGAVSGNALQVPVDVPVNACGNTVDVIAALNPAFGNECEN) enclose the Chaplin 1 domain. 2 disordered regions span residues 71-121 (NASD…GNNA) and 150-224 (CEND…GSEG). A compositionally biased stretch (low complexity) spans 86–108 (EDASSSSSSSTSASSSGSHADGA). A Chaplin 2 domain is found at 112–152 (SPGVGSGNNAQVPVDVPVNLCGNTVDVIAALNPVFGNKCEN). Acidic residues predominate over residues 153 to 165 (DAEEPPGYGEEEP). The segment covering 210 to 224 (QTEQPPALAETGSEG) has biased composition (low complexity). The short motif at 217–221 (LAETG) is the LPXTG sorting signal element. 2 propeptides (removed by sortase) span residues 219–252 (ETGS…LSGR) and 221–252 (GSEG…LSGR). Residue threonine 220 is modified to Pentaglycyl murein peptidoglycan amidated threonine.

The protein belongs to the chaplin family. Long chaplin subfamily.

The protein resides in the secreted. Its subcellular location is the cell wall. In terms of biological role, one of 8 partially redundant surface-active proteins required for efficient formation of aerial mycelium; the short chaplins assemble into a hydrophobic, amyloidal fibrillar surface layer that envelopes and protects aerial hyphae and spores, presumably anchored to the long chaplins. Chaplins have an overlapping function with the surface-active SapB peptide; chaplins are essential on minimal medium while on rich medium both chaplins and SapB are required for efficient aerial hyphae formation. A minimal chaplin strain capable of forming aerial mycelium/hyphae on minimal medium contains ChpC, ChpE and ChpH. The strain also has restored rodlet formation on the hyphae surface. A second minimal chaplin strain with ChpA, ChpD and ChpE makes slightly less robust hyphae. The long chaplins (ChpA, ChpB, ChpC) are not absolutely necessary for short chaplin localization or rodlet formation, but probably play a role in initiating aerial hyphae development. Chaplins are also involved in cell attachment to a hydrophobic surface. The chain is Chaplin-A from Streptomyces coelicolor (strain ATCC BAA-471 / A3(2) / M145).